We begin with the raw amino-acid sequence, 473 residues long: Histidinol dehydrogenase, chloroplastic (473 aa).

Positions 1-28 (MSLRPGRAHPLAASPLHTPLPARPRPQL) are disordered. NAD(+) contacts are provided by Tyr-162, Gln-224, and Asn-247. Substrate-binding residues include Ser-273, Gln-295, and His-298. Positions 295 and 298 each coordinate Zn(2+). Catalysis depends on proton acceptor residues Glu-363 and His-364. 4 residues coordinate substrate: His-364, Asp-397, Glu-451, and His-456. Residue Asp-397 coordinates Zn(2+). His-456 serves as a coordination point for Zn(2+).

This sequence belongs to the histidinol dehydrogenase family. Zn(2+) is required as a cofactor.

The protein localises to the plastid. It is found in the chloroplast. The enzyme catalyses L-histidinol + 2 NAD(+) + H2O = L-histidine + 2 NADH + 3 H(+). Its pathway is amino-acid biosynthesis; L-histidine biosynthesis; L-histidine from 5-phospho-alpha-D-ribose 1-diphosphate: step 9/9. Its function is as follows. Catalyzes the sequential NAD-dependent oxidations of L-histidinol to L-histidinaldehyde and then to L-histidine. The polypeptide is Histidinol dehydrogenase, chloroplastic (HDH) (Oryza sativa subsp. japonica (Rice)).